A 361-amino-acid polypeptide reads, in one-letter code: MIVRKNMGRAKSLLMLLMVLGFFFATYNLVSMIMDHRAGNWVADGLESFDRKMLGSASTNAKYHVALTATDAAYSQWQCRIMYYWYKKVKDMPGSNMGKFTRILHSGRTDQLMDEIPTFVVDPLPEGLDRGYIVLNRPWAFVQWLEKADIEEEYILMAEPDHIFVNPLPNLASRTQPAGYPFFYIKPAENEKIIRKFYPKDKGPVTDVDPIGNSPVIIQKSLIEEIAPTWVNVSLRMKDDPETDKAFGWVLEMYAYAVASALHGVKHILRKDFMLQPPWDRHVGKTFIIHYTYGCDYNLKGELTYGKIGEWRFDKRSYLMGPPPKNLSLPPPGVPESVVRLVKMVNEATANIPEWDSLNRS.

The chain crosses the membrane as a helical; Signal-anchor span at residues 13-33; sequence LLMLLMVLGFFFATYNLVSMI.

The protein localises to the golgi apparatus membrane. The enzyme catalyses trans-4-hydroxy-L-prolyl-[protein] + UDP-beta-L-arabinofuranose = O-(beta-L-arabinofuranosyl)-trans-4-hydroxy-L-prolyl-[protein] + UDP + H(+). Functionally, glycosyltransferase involved in the O-arabinosylation of several proteins including extensins and small signaling peptides. Catalyzes the transfer of the initial L-arabinose to the hydroxyl group of Hyp residues. Probably involved in the arabinosylation of CLAVATA3/ESR-related (CLE) signaling peptides that move from root to shoot, to interact with receptor kinase signaling that regulates nodulation. Involved in long distance nodulation signaling events. Involved in the autoregulation of nodulation (AON), a long distance systemic signaling from root to shoot and back again, which allows legumes to limit the number of root nodules formed based on available nitrogen and previous rhizobial colonization. The sequence is that of Hydroxyproline O-arabinosyltransferase PLENTY from Lotus japonicus (Lotus corniculatus var. japonicus).